A 372-amino-acid polypeptide reads, in one-letter code: Chorismate synthase (372 aa).

Position 48 (Arg-48) interacts with NADP(+). Residues 131–133, 243–244, Gly-288, 303–307, and Arg-329 contribute to the FMN site; these read RSS, NA, and KPTSS.

The protein belongs to the chorismate synthase family. In terms of assembly, homotetramer. Requires FMNH2 as cofactor.

It catalyses the reaction 5-O-(1-carboxyvinyl)-3-phosphoshikimate = chorismate + phosphate. Its pathway is metabolic intermediate biosynthesis; chorismate biosynthesis; chorismate from D-erythrose 4-phosphate and phosphoenolpyruvate: step 7/7. In terms of biological role, catalyzes the anti-1,4-elimination of the C-3 phosphate and the C-6 proR hydrogen from 5-enolpyruvylshikimate-3-phosphate (EPSP) to yield chorismate, which is the branch point compound that serves as the starting substrate for the three terminal pathways of aromatic amino acid biosynthesis. This reaction introduces a second double bond into the aromatic ring system. This Caulobacter vibrioides (strain ATCC 19089 / CIP 103742 / CB 15) (Caulobacter crescentus) protein is Chorismate synthase.